The following is a 212-amino-acid chain: Transcription factor MYB8 (212 aa).

HTH myb-type domains are found at residues 9–61 and 62–116; these read KAHM…INYL and RPDL…KRKL. 2 consecutive DNA-binding regions (H-T-H motif) follow at residues 37–61 and 89–112; these read WRSLPKSVGLLRCGKSCRLRWINYL and WSLIAGKLPGRTDNEIKNYWNTHI.

It is found in the nucleus. Functionally, transcription activator. This chain is Transcription factor MYB8, found in Arabidopsis thaliana (Mouse-ear cress).